We begin with the raw amino-acid sequence, 120 residues long: UPF0102 protein COXBURSA331_A1934 (120 aa).

It belongs to the UPF0102 family.

This is UPF0102 protein COXBURSA331_A1934 from Coxiella burnetii (strain RSA 331 / Henzerling II).